A 63-amino-acid chain; its full sequence is ATP synthase F(0) complex subunit 8 (63 aa).

Residues 8-24 (TWFLTILSVMLTLFTLL) traverse the membrane as a helical segment. Residue Lys-57 is modified to N6-acetyllysine.

This sequence belongs to the ATPase protein 8 family. Component of the ATP synthase complex composed at least of ATP5F1A/subunit alpha, ATP5F1B/subunit beta, ATP5MC1/subunit c (homooctomer), MT-ATP6/subunit a, MT-ATP8/subunit 8, ATP5ME/subunit e, ATP5MF/subunit f, ATP5MG/subunit g, ATP5MK/subunit k, ATP5MJ/subunit j, ATP5F1C/subunit gamma, ATP5F1D/subunit delta, ATP5F1E/subunit epsilon, ATP5PF/subunit F6, ATP5PB/subunit b, ATP5PD/subunit d, ATP5PO/subunit OSCP. ATP synthase complex consists of a soluble F(1) head domain (subunits alpha(3) and beta(3)) - the catalytic core - and a membrane F(0) domain - the membrane proton channel (subunits c, a, 8, e, f, g, k and j). These two domains are linked by a central stalk (subunits gamma, delta, and epsilon) rotating inside the F1 region and a stationary peripheral stalk (subunits F6, b, d, and OSCP). Interacts with PRICKLE3.

The protein resides in the mitochondrion membrane. Functionally, subunit 8, of the mitochondrial membrane ATP synthase complex (F(1)F(0) ATP synthase or Complex V) that produces ATP from ADP in the presence of a proton gradient across the membrane which is generated by electron transport complexes of the respiratory chain. ATP synthase complex consist of a soluble F(1) head domain - the catalytic core - and a membrane F(1) domain - the membrane proton channel. These two domains are linked by a central stalk rotating inside the F(1) region and a stationary peripheral stalk. During catalysis, ATP synthesis in the catalytic domain of F(1) is coupled via a rotary mechanism of the central stalk subunits to proton translocation. In vivo, can only synthesize ATP although its ATP hydrolase activity can be activated artificially in vitro. Part of the complex F(0) domain. The polypeptide is ATP synthase F(0) complex subunit 8 (Physeter macrocephalus (Sperm whale)).